The sequence spans 193 residues: MKLKKHVAVLLISFLCLIGLVTQHAWSSNGLPRIDNKTLAKLSLQHPVVVLFRHAERCDRSSNECLSDKTGITVKGANDARSLGKELTTDIKKYDLYASDTVRTIQSATWFATDKKVTVDKKFQQCGKAIYSAINDVQIRSPDKNIIIFTHNHCLSYIAKDKRDVKFSPDYLDGLVMHVENGKLFLDGEFVRY.

A signal peptide spans 1-25 (MKLKKHVAVLLISFLCLIGLVTQHA).

This sequence belongs to the phosphoglycerate mutase family. Ais subfamily.

Its subcellular location is the periplasm. It functions in the pathway bacterial outer membrane biogenesis; lipopolysaccharide metabolism. Catalyzes the dephosphorylation of heptose(II) of the outer membrane lipopolysaccharide core. The polypeptide is Lipopolysaccharide core heptose(II)-phosphate phosphatase (Escherichia fergusonii (strain ATCC 35469 / DSM 13698 / CCUG 18766 / IAM 14443 / JCM 21226 / LMG 7866 / NBRC 102419 / NCTC 12128 / CDC 0568-73)).